The chain runs to 209 residues: Uracil phosphoribosyltransferase (209 aa).

5-phospho-alpha-D-ribose 1-diphosphate-binding positions include R79, R104, and 131–139 (DPMLATGNS). Residues I194 and 199 to 201 (GDA) contribute to the uracil site. D200 is a binding site for 5-phospho-alpha-D-ribose 1-diphosphate.

The protein belongs to the UPRTase family. It depends on Mg(2+) as a cofactor.

The catalysed reaction is UMP + diphosphate = 5-phospho-alpha-D-ribose 1-diphosphate + uracil. Its pathway is pyrimidine metabolism; UMP biosynthesis via salvage pathway; UMP from uracil: step 1/1. With respect to regulation, allosterically activated by GTP. Functionally, catalyzes the conversion of uracil and 5-phospho-alpha-D-ribose 1-diphosphate (PRPP) to UMP and diphosphate. This is Uracil phosphoribosyltransferase from Rhizobium etli (strain CIAT 652).